The chain runs to 165 residues: Peptide methionine sulfoxide reductase MsrA (165 aa).

Residue cysteine 10 is part of the active site.

Belongs to the MsrA Met sulfoxide reductase family.

The catalysed reaction is L-methionyl-[protein] + [thioredoxin]-disulfide + H2O = L-methionyl-(S)-S-oxide-[protein] + [thioredoxin]-dithiol. The enzyme catalyses [thioredoxin]-disulfide + L-methionine + H2O = L-methionine (S)-S-oxide + [thioredoxin]-dithiol. Has an important function as a repair enzyme for proteins that have been inactivated by oxidation. Catalyzes the reversible oxidation-reduction of methionine sulfoxide in proteins to methionine. The sequence is that of Peptide methionine sulfoxide reductase MsrA from Campylobacter jejuni subsp. jejuni serotype O:23/36 (strain 81-176).